The primary structure comprises 1178 residues: Leucine--tRNA ligase, cytoplasmic (1178 aa).

L-leucine-binding residues include Y54 and Y56. The short motif at 62–65 is the 'HIGH' region element; that stretch reads HLGH. Position 169 is a phosphoserine (S169). Residues 262 to 511 are editing domain; sequence GPQEYTLVKL…DAGDALIYME (250 aa). L596 and S599 together coordinate L-leucine. Residues 718-722 carry the 'KMSKS' region motif; sequence KMSKS. Position 721 (K721) interacts with ATP. S722 is subject to Phosphoserine. K972 and K1049 each carry N6-acetyllysine.

The protein belongs to the class-I aminoacyl-tRNA synthetase family.

It is found in the cytoplasm. It catalyses the reaction tRNA(Leu) + L-leucine + ATP = L-leucyl-tRNA(Leu) + AMP + diphosphate. The enzyme catalyses L-methionyl-tRNA(Leu) + H2O = tRNA(Leu) + L-methionine + H(+). Its activity is regulated as follows. 5-fluoro-1,3-dihydro-1-hydroxy-1,2-benzoxaborole inhibits LARS1 by forming a covalent adduct with the 3' adenosine of tRNA(Leu) at the editing site, thus locking the enzyme in an inactive conformation. Functionally, aminoacyl-tRNA synthetase that catalyzes the specific attachment of leucine to its cognate tRNA (tRNA(Leu)). It performs tRNA aminoacylation in a two-step reaction: Leu is initially activated by ATP to form a leucyl-adenylate (Leu-AMP) intermediate; then the leucyl moiety is transferred to the acceptor 3' end of the tRNA to yield leucyl-tRNA. To improve the fidelity of catalytic reactions, it is also able to hydrolyze misactivated aminoacyl-adenylate intermediates (pre-transfer editing) and mischarged aminoacyl-tRNAs (post-transfer editing). The sequence is that of Leucine--tRNA ligase, cytoplasmic (Lars1) from Mus musculus (Mouse).